The following is a 239-amino-acid chain: Probable transcriptional regulatory protein Pnuc_0618 (239 aa).

Residues 1–21 (MAGHSKWANIQHRKGRQDEKR) are disordered.

Belongs to the TACO1 family.

The protein localises to the cytoplasm. The protein is Probable transcriptional regulatory protein Pnuc_0618 of Polynucleobacter asymbioticus (strain DSM 18221 / CIP 109841 / QLW-P1DMWA-1) (Polynucleobacter necessarius subsp. asymbioticus).